Reading from the N-terminus, the 251-residue chain is MILYEYPFNERIRTLLRLEDLFERFAFFLAQEDPREHHVALTTLFEIAEVTGRADLKSDLMKELERQRQTLAPFRGNPGIEQNALEAVLGEIEQTLANLAQMQGKTGQHLVDNEWLASIRSRAVIPGGTCKFDLPSYYAWQQWPAEQRRQDIAKWMLPMLPLRDAAAIVLRLARESGQASKVMAMQGSYQQMLSGRSYQLMQVRVPPELRVIPEASANKYMLWVRFTMQDGDVRPRAVDIDVPFHLTLCNL.

This sequence belongs to the ZapD family. As to quaternary structure, interacts with FtsZ.

The protein resides in the cytoplasm. In terms of biological role, cell division factor that enhances FtsZ-ring assembly. Directly interacts with FtsZ and promotes bundling of FtsZ protofilaments, with a reduction in FtsZ GTPase activity. The chain is Cell division protein ZapD from Burkholderia cenocepacia (strain HI2424).